We begin with the raw amino-acid sequence, 334 residues long: Ribosomal RNA small subunit methyltransferase C (334 aa).

The protein belongs to the methyltransferase superfamily. RsmC family. As to quaternary structure, monomer.

It localises to the cytoplasm. The enzyme catalyses guanosine(1207) in 16S rRNA + S-adenosyl-L-methionine = N(2)-methylguanosine(1207) in 16S rRNA + S-adenosyl-L-homocysteine + H(+). In terms of biological role, specifically methylates the guanine in position 1207 of 16S rRNA in the 30S particle. The sequence is that of Ribosomal RNA small subunit methyltransferase C from Idiomarina loihiensis (strain ATCC BAA-735 / DSM 15497 / L2-TR).